The primary structure comprises 890 residues: DNA mismatch repair protein MutS (890 aa).

607–614 (GPNMSGKS) is a binding site for ATP.

This sequence belongs to the DNA mismatch repair MutS family.

In terms of biological role, this protein is involved in the repair of mismatches in DNA. It is possible that it carries out the mismatch recognition step. This protein has a weak ATPase activity. The sequence is that of DNA mismatch repair protein MutS from Bacillus thuringiensis subsp. konkukian (strain 97-27).